We begin with the raw amino-acid sequence, 251 residues long: Hydroxyacylglutathione hydrolase (251 aa).

Residues H53, H55, D57, H58, H110, D127, and H165 each coordinate Zn(2+).

This sequence belongs to the metallo-beta-lactamase superfamily. Glyoxalase II family. As to quaternary structure, monomer. It depends on Zn(2+) as a cofactor.

The enzyme catalyses an S-(2-hydroxyacyl)glutathione + H2O = a 2-hydroxy carboxylate + glutathione + H(+). Its pathway is secondary metabolite metabolism; methylglyoxal degradation; (R)-lactate from methylglyoxal: step 2/2. In terms of biological role, thiolesterase that catalyzes the hydrolysis of S-D-lactoyl-glutathione to form glutathione and D-lactic acid. The protein is Hydroxyacylglutathione hydrolase of Serratia proteamaculans (strain 568).